A 360-amino-acid chain; its full sequence is Thiol protease SEN102 (360 aa).

A signal peptide spans 1 to 20 (MAKPKFIALALVALSFLSIA). Positions 21 to 133 (QSIPFTEKDL…ENVGSLPAAS (113 aa)) are cleaved as a propeptide — activation peptide. Intrachain disulfides connect cysteine 151/cysteine 193, cysteine 185/cysteine 225, and cysteine 283/cysteine 335. Residue cysteine 154 is part of the active site. Catalysis depends on residues histidine 289 and asparagine 310. An N-linked (GlcNAc...) asparagine glycan is attached at asparagine 353. The short motif at 357–360 (RDEL) is the Prevents secretion from ER element.

Belongs to the peptidase C1 family.

It is found in the endoplasmic reticulum lumen. The chain is Thiol protease SEN102 (SEN102) from Hemerocallis sp. (Daylily).